The following is a 310-amino-acid chain: DNA-directed RNA polymerase subunit alpha (310 aa).

The segment at 1 to 230 is alpha N-terminal domain (alpha-NTD); the sequence is MLGKVNGVQI…KLFNPLRVLD (230 aa). The segment at 242–310 is alpha C-terminal domain (alpha-CTD); sequence NSLIKQKLIE…YKKFGVKLKH (69 aa).

Belongs to the RNA polymerase alpha chain family. In terms of assembly, in plastids the minimal PEP RNA polymerase catalytic core is composed of four subunits: alpha, beta, beta', and beta''. When a (nuclear-encoded) sigma factor is associated with the core the holoenzyme is formed, which can initiate transcription.

It localises to the plastid. The protein resides in the chloroplast. The enzyme catalyses RNA(n) + a ribonucleoside 5'-triphosphate = RNA(n+1) + diphosphate. In terms of biological role, DNA-dependent RNA polymerase catalyzes the transcription of DNA into RNA using the four ribonucleoside triphosphates as substrates. This Cyanidium caldarium (Red alga) protein is DNA-directed RNA polymerase subunit alpha.